The chain runs to 283 residues: Ribosomal RNA small subunit methyltransferase A (283 aa).

6 residues coordinate S-adenosyl-L-methionine: asparagine 29, leucine 31, glycine 56, glutamate 77, aspartate 102, and asparagine 123.

It belongs to the class I-like SAM-binding methyltransferase superfamily. rRNA adenine N(6)-methyltransferase family. RsmA subfamily.

It is found in the cytoplasm. It carries out the reaction adenosine(1518)/adenosine(1519) in 16S rRNA + 4 S-adenosyl-L-methionine = N(6)-dimethyladenosine(1518)/N(6)-dimethyladenosine(1519) in 16S rRNA + 4 S-adenosyl-L-homocysteine + 4 H(+). Functionally, specifically dimethylates two adjacent adenosines (A1518 and A1519) in the loop of a conserved hairpin near the 3'-end of 16S rRNA in the 30S particle. May play a critical role in biogenesis of 30S subunits. The sequence is that of Ribosomal RNA small subunit methyltransferase A from Acidobacterium capsulatum (strain ATCC 51196 / DSM 11244 / BCRC 80197 / JCM 7670 / NBRC 15755 / NCIMB 13165 / 161).